We begin with the raw amino-acid sequence, 95 residues long: Protein IDA-LIKE 2 (95 aa).

The signal sequence occupies residues 1–35 (MSSRNQRSRITSSFFVSFFTRTILLLLILLLGFCN). The interval 75–95 (ASGPSRKHNDIGLLSWHRSSP) is disordered.

As to expression, expressed in leaves, buds, flowers, seedlings and seeds. Detected at the base of pedicel, in the floral and funicule abscission zones and in vascular tissues.

The protein resides in the secreted. It is found in the extracellular space. May be involved in floral abscission. This Arabidopsis thaliana (Mouse-ear cress) protein is Protein IDA-LIKE 2 (IDL2).